Consider the following 405-residue polypeptide: NADH-quinone oxidoreductase subunit D (405 aa).

This sequence belongs to the complex I 49 kDa subunit family. In terms of assembly, NDH-1 is composed of 14 different subunits. Subunits NuoB, C, D, E, F, and G constitute the peripheral sector of the complex.

It localises to the cell inner membrane. It catalyses the reaction a quinone + NADH + 5 H(+)(in) = a quinol + NAD(+) + 4 H(+)(out). In terms of biological role, NDH-1 shuttles electrons from NADH, via FMN and iron-sulfur (Fe-S) centers, to quinones in the respiratory chain. The immediate electron acceptor for the enzyme in this species is believed to be ubiquinone. Couples the redox reaction to proton translocation (for every two electrons transferred, four hydrogen ions are translocated across the cytoplasmic membrane), and thus conserves the redox energy in a proton gradient. The protein is NADH-quinone oxidoreductase subunit D of Leptospira interrogans serogroup Icterohaemorrhagiae serovar copenhageni (strain Fiocruz L1-130).